Here is a 425-residue protein sequence, read N- to C-terminus: Stabilizer of axonemal microtubules 4 (425 aa).

Disordered regions lie at residues P93 to K126, E203 to L225, and K316 to P335. Positions F207–S222 are enriched in polar residues.

In terms of assembly, microtubule inner protein component of sperm flagellar doublet microtubules. Interacts with PPP1CA.

It is found in the cell projection. It localises to the cilium. The protein resides in the cytoplasm. Its subcellular location is the cytoskeleton. The protein localises to the flagellum axoneme. This Homo sapiens (Human) protein is Stabilizer of axonemal microtubules 4.